We begin with the raw amino-acid sequence, 212 residues long: Dephospho-CoA kinase (212 aa).

In terms of domain architecture, DPCK spans 6–211; sequence RLGLTGGIGS…LSCQPLSPNQ (206 aa). 14 to 19 contacts ATP; sequence GSGKST.

It belongs to the CoaE family.

It is found in the cytoplasm. It catalyses the reaction 3'-dephospho-CoA + ATP = ADP + CoA + H(+). It functions in the pathway cofactor biosynthesis; coenzyme A biosynthesis; CoA from (R)-pantothenate: step 5/5. In terms of biological role, catalyzes the phosphorylation of the 3'-hydroxyl group of dephosphocoenzyme A to form coenzyme A. The chain is Dephospho-CoA kinase from Albidiferax ferrireducens (strain ATCC BAA-621 / DSM 15236 / T118) (Rhodoferax ferrireducens).